We begin with the raw amino-acid sequence, 147 residues long: Large ribosomal subunit protein mL40 (147 aa).

Residues 1 to 26 constitute a mitochondrion transit peptide; the sequence is MLAQTFKKPHRAVLEQVSGTTVFIRN.

It belongs to the mitochondrion-specific ribosomal protein mL40 family. As to quaternary structure, component of the mitochondrial large ribosomal subunit (mt-LSU). Mature yeast 74S mitochondrial ribosomes consist of a small (37S) and a large (54S) subunit. The 37S small subunit contains a 15S ribosomal RNA (15S mt-rRNA) and 34 different proteins. The 54S large subunit contains a 21S rRNA (21S mt-rRNA) and 46 different proteins.

Its subcellular location is the mitochondrion. Component of the mitochondrial ribosome (mitoribosome), a dedicated translation machinery responsible for the synthesis of mitochondrial genome-encoded proteins, including at least some of the essential transmembrane subunits of the mitochondrial respiratory chain. The mitoribosomes are attached to the mitochondrial inner membrane and translation products are cotranslationally integrated into the membrane. The protein is Large ribosomal subunit protein mL40 (MRPL28) of Saccharomyces cerevisiae (strain ATCC 204508 / S288c) (Baker's yeast).